Reading from the N-terminus, the 290-residue chain is 33 kDa chaperonin (290 aa).

Disulfide bonds link cysteine 235/cysteine 237 and cysteine 268/cysteine 271.

This sequence belongs to the HSP33 family. Post-translationally, under oxidizing conditions two disulfide bonds are formed involving the reactive cysteines. Under reducing conditions zinc is bound to the reactive cysteines and the protein is inactive.

The protein localises to the cytoplasm. In terms of biological role, redox regulated molecular chaperone. Protects both thermally unfolding and oxidatively damaged proteins from irreversible aggregation. Plays an important role in the bacterial defense system toward oxidative stress. The sequence is that of 33 kDa chaperonin from Streptococcus pyogenes serotype M2 (strain MGAS10270).